Consider the following 136-residue polypeptide: Large ribosomal subunit protein uL16c (136 aa).

Belongs to the universal ribosomal protein uL16 family. Part of the 50S ribosomal subunit.

It is found in the plastid. The protein resides in the chloroplast. This is Large ribosomal subunit protein uL16c from Phaseolus angularis (Azuki bean).